We begin with the raw amino-acid sequence, 116 residues long: Nitrogenase-stabilizing/protective protein NifW (116 aa).

The protein belongs to the NifW family. Homotrimer; associates with NifD.

In terms of biological role, may protect the nitrogenase Fe-Mo protein from oxidative damage. The polypeptide is Nitrogenase-stabilizing/protective protein NifW (Rhodopseudomonas palustris (strain ATCC BAA-98 / CGA009)).